The chain runs to 695 residues: Elongation factor G (695 aa).

The region spanning 10–285 (DKTRNIGIMA…GVVDYLPSPL (276 aa)) is the tr-type G domain. GTP contacts are provided by residues 19 to 26 (AHIDAGKT), 83 to 87 (DTPGH), and 137 to 140 (NKMD).

It belongs to the TRAFAC class translation factor GTPase superfamily. Classic translation factor GTPase family. EF-G/EF-2 subfamily.

It is found in the cytoplasm. Its function is as follows. Catalyzes the GTP-dependent ribosomal translocation step during translation elongation. During this step, the ribosome changes from the pre-translocational (PRE) to the post-translocational (POST) state as the newly formed A-site-bound peptidyl-tRNA and P-site-bound deacylated tRNA move to the P and E sites, respectively. Catalyzes the coordinated movement of the two tRNA molecules, the mRNA and conformational changes in the ribosome. In Latilactobacillus sakei subsp. sakei (strain 23K) (Lactobacillus sakei subsp. sakei), this protein is Elongation factor G.